The primary structure comprises 332 residues: Glycerol-3-phosphate dehydrogenase [NAD(P)+] 2 (332 aa).

Ser17, Trp18, Arg37, and Lys112 together coordinate NADPH. Lys112 and Gly140 together coordinate sn-glycerol 3-phosphate. Ala144 lines the NADPH pocket. 5 residues coordinate sn-glycerol 3-phosphate: Lys195, Asp243, Ser253, Arg254, and Asn255. Lys195 (proton acceptor) is an active-site residue. Arg254 serves as a coordination point for NADPH. Residues Val278 and Glu280 each contribute to the NADPH site.

It belongs to the NAD-dependent glycerol-3-phosphate dehydrogenase family.

Its subcellular location is the cytoplasm. It catalyses the reaction sn-glycerol 3-phosphate + NAD(+) = dihydroxyacetone phosphate + NADH + H(+). The catalysed reaction is sn-glycerol 3-phosphate + NADP(+) = dihydroxyacetone phosphate + NADPH + H(+). The protein operates within membrane lipid metabolism; glycerophospholipid metabolism. Catalyzes the reduction of the glycolytic intermediate dihydroxyacetone phosphate (DHAP) to sn-glycerol 3-phosphate (G3P), the key precursor for phospholipid synthesis. This chain is Glycerol-3-phosphate dehydrogenase [NAD(P)+] 2, found in Mycolicibacterium paratuberculosis (strain ATCC BAA-968 / K-10) (Mycobacterium paratuberculosis).